Here is a 91-residue protein sequence, read N- to C-terminus: UPF0335 protein BBta_6866 (91 aa).

This sequence belongs to the UPF0335 family.

This Bradyrhizobium sp. (strain BTAi1 / ATCC BAA-1182) protein is UPF0335 protein BBta_6866.